A 1291-amino-acid polypeptide reads, in one-letter code: Tat-binding homolog 7 (1291 aa).

The disordered stretch occupies residues M1–R345. Residues R64 to R82 show a composition bias toward basic and acidic residues. Residues S88 to M99 are compositionally biased toward polar residues. Over residues E226–E257 the composition is skewed to acidic residues. Residues N298–R311 are compositionally biased toward basic residues. An ATP-binding site is contributed by G432 to T439. The region spanning A914–E1022 is the Bromo domain. A disordered region spans residues K1110–P1194. Over residues N1128 to S1142 the composition is skewed to basic residues. Acidic residues predominate over residues E1148–I1164. Residues L1168–K1190 show a composition bias toward basic and acidic residues.

It belongs to the AAA ATPase family.

In terms of biological role, thought to form a complex that enhances transcription from repetitive DNA sequences by modulating chromatin structure. The sequence is that of Tat-binding homolog 7 (lex-1) from Caenorhabditis elegans.